The primary structure comprises 145 residues: Putative antiporter subunit mnhG2 (145 aa).

A run of 3 helical transmembrane segments spans residues 11 to 31 (IAAV…IGIV), 51 to 71 (VLLT…FFSV), and 72 to 92 (RLLL…HLVA).

It belongs to the CPA3 antiporters (TC 2.A.63) subunit G family. May form a heterooligomeric complex that consists of seven subunits: mnhA2, mnhB2, mnhC2, mnhD2, mnhE2, mnhF2 and mnhG2.

Its subcellular location is the cell membrane. The protein is Putative antiporter subunit mnhG2 (mnhG2) of Staphylococcus aureus (strain bovine RF122 / ET3-1).